A 925-amino-acid chain; its full sequence is Periplasmic nitrate reductase (925 aa).

The tat-type signal signal peptide spans 1 to 30 (MDRREFIKSSAAAAACSAAGIAVPSSLSAA). The region spanning 36–92 (WRWDKSACRFCGTGCGIMVATKNGKIVAVKGDPLAPVNRGLNCIKGYFNAKIMYGED) is the 4Fe-4S Mo/W bis-MGD-type domain. Cys-43, Cys-46, Cys-50, and Cys-78 together coordinate [4Fe-4S] cluster. Mo-bis(molybdopterin guanine dinucleotide) contacts are provided by residues Lys-80, Gln-148, Asn-173, Cys-177, 210–217 (WGANMAEM), Met-418, Gln-422, Asn-528, 553–554 (SD), Lys-576, Asp-603, and 815–824 (TGRVLEHWHS). Trp-891 provides a ligand contact to substrate. Residues Asn-899 and Lys-916 each coordinate Mo-bis(molybdopterin guanine dinucleotide).

The protein belongs to the prokaryotic molybdopterin-containing oxidoreductase family. NasA/NapA/NarB subfamily. Component of the periplasmic nitrate reductase NapAB complex composed of NapA and NapB. [4Fe-4S] cluster serves as cofactor. The cofactor is Mo-bis(molybdopterin guanine dinucleotide). Predicted to be exported by the Tat system. The position of the signal peptide cleavage has not been experimentally proven.

Its subcellular location is the periplasm. The enzyme catalyses 2 Fe(II)-[cytochrome] + nitrate + 2 H(+) = 2 Fe(III)-[cytochrome] + nitrite + H2O. In terms of biological role, catalytic subunit of the periplasmic nitrate reductase complex NapAB. Receives electrons from NapB and catalyzes the reduction of nitrate to nitrite. This Campylobacter fetus subsp. fetus (strain 82-40) protein is Periplasmic nitrate reductase.